Reading from the N-terminus, the 84-residue chain is Small ribosomal subunit protein uS15 (84 aa).

Belongs to the universal ribosomal protein uS15 family. Part of the 30S ribosomal subunit. Forms a bridge to the 50S subunit in the 70S ribosome, contacting the 23S rRNA.

One of the primary rRNA binding proteins, it binds directly to 16S rRNA where it helps nucleate assembly of the platform of the 30S subunit by binding and bridging several RNA helices of the 16S rRNA. Its function is as follows. Forms an intersubunit bridge (bridge B4) with the 23S rRNA of the 50S subunit in the ribosome. This chain is Small ribosomal subunit protein uS15, found in Fervidobacterium nodosum (strain ATCC 35602 / DSM 5306 / Rt17-B1).